An 834-amino-acid polypeptide reads, in one-letter code: Enhancer of filamentation 1 (834 aa).

The required for interaction with ITCH stretch occupies residues 1-505 (MKYKNLMARA…HQILSQTSHD (505 aa)). The region spanning 3 to 65 (YKNLMARALY…PGNRVKLLIG (63 aa)) is the SH3 domain. A phosphotyrosine; by ABL1 mark is found at Tyr92, Tyr164, Tyr166, Tyr177, Tyr189, Tyr214, and Tyr223. The tract at residues 102–229 (RDTIYQVPPS…KGVYAIPPSA (128 aa)) is interacts strongly with spindle-regulatory protein D1M1. The disordered stretch occupies residues 238–260 (EKDYDFPPPMRQAGRPDLRPEGV). At Tyr279 the chain carries Phosphotyrosine; by ABL1. Positions 291 to 316 (ARRHQSLSPNHPPPQLGQSVGSQNDA) are disordered. Ser296 carries the post-translational modification Phosphoserine. Over residues 306–315 (LGQSVGSQND) the composition is skewed to polar residues. Tyr317 is modified (phosphotyrosine; by ABL1). Disordered stretches follow at residues 328–398 (PPAE…SPAQ) and 560–623 (GPGS…GSER). A compositionally biased stretch (basic and acidic residues) spans 332–344 (TSEKANPQERDGV). An interacts with CTTN region spans residues 351–834 (NPPDAKGSRD…KRSLLEMATF (484 aa)). A Caspase cleavage related site motif is present at residues 360-363 (DLVD). At Ser369 the chain carries Phosphoserine. Low complexity predominate over residues 369–395 (SFSSTGSTRSNMSTSSTSSKESSLSAS). Positions 710-760 (FYYDQCETHFISLLNAIDALFSCVSSAQPPRIFVAHSKFVILSAHKLVFIG) are divergent helix-loop-helix motif. The tract at residues 710–834 (FYYDQCETHF…KRSLLEMATF (125 aa)) is required for interaction with PLK1. Phosphoserine; by CSNK1D and CSNK1E is present on Ser780. Phosphothreonine; by CSNK1E is present on Thr804.

This sequence belongs to the CAS family. In terms of assembly, homodimer. Forms heterodimers with BCAR1/p130cas. Forms complexes with PTK2B/RAFTK, adapter protein CRKL and LYN kinase. Part of a complex composed of NEDD9, AURKA and CTTN; within the complex NEDD9 acts as a scaffold protein and is required for complex formation. Part of a ternary complex composed of SMAD3, ITCH/AIP4 and NEDD9/HEF1; within the complex NEDD9/HEF1 interacts (via N-terminus) with ITCH/AIP4 (via WW domains); the complex mediates ubiquitination and proteasomal degradation of NEDD9/HEF1. Interacts with SMAD3; the interaction promotes NEDD9 ubiquitination and proteasomal degradation. Interacts with ID2. Interacts with CTTN (via N-terminus). Interacts with MICAL. Interacts with TXNL4/DIM1. Interacts with BCAR3 (via Ras-GEF domain). Interacts with SH2D3C isoform 1 and isoform 2. Interacts with ECT2. Interacts with PTPN11/SHP-2 (via SH2 domains); the interaction is enhanced when NEDD9/CAS-L is tyrosine phosphorylated. Interacts (via C-terminus) with PLK1 (via polo box domains). Interacts with NKX2-5. Interacts with SMAD3; the interaction is inhibited by oxidation of NEDD9. Interacts with NEDD9/HEF1; interaction is induced by CXCL12 promotion of ABL-mediated phosphorylation of NEDD9/HEF1. Interacts (via SH3 domain) with PTK2/FAK. Interacts with FYN; in the presence of PTK2. Interacts with INPPL1/SHIP2. Cell cycle-regulated processing produces four isoforms: p115, p105, p65, and p55. Isoform p115 arises from p105 phosphorylation and appears later in the cell cycle. Isoform p55 arises from p105 as a result of cleavage at a caspase cleavage-related site and it appears specifically at mitosis. The p65 isoform is poorly detected. In terms of processing, polyubiquitinated by ITCH/AIP4, leading to proteasomal degradation. Post-translationally, PTK2/FAK1 phosphorylates the protein at the YDYVHL motif (conserved among all cas proteins) following integrin stimulation. The SRC family kinases (FYN, SRC, LCK and CRK) are recruited to the phosphorylated sites and can phosphorylate other tyrosine residues. Ligation of either integrin beta-1 or B-cell antigen receptor on tonsillar B-cells and B-cell lines promotes tyrosine phosphorylation and both integrin and BCR-mediated tyrosine phosphorylation requires an intact actin network. Phosphorylation is required to recruit NEDD9 to T-cell receptor microclusters at the periphery of newly formed immunological synapses. In fibroblasts transformation with oncogene v-ABL results in an increase in tyrosine phosphorylation. Transiently phosphorylated following CD3 cross-linking and this phosphorylated form binds to CRKL and C3G. A mutant lacking the SH3 domain is phosphorylated upon CD3 cross-linking but not upon integrin beta-1 cross-linking. Tyrosine phosphorylation occurs upon stimulation of the G-protein coupled C1a calcitonin receptor. Calcitonin-stimulated tyrosine phosphorylation is mediated by calcium- and protein kinase C-dependent mechanisms and requires the integrity of the actin cytoskeleton. Phosphorylation at Ser-369 induces proteasomal degradation. Phosphorylated by LYN. Phosphorylation at Ser-780 by CSNK1D or CSNK1E, or phosphorylation of Thr-804 by CSNK1E enhances the interaction of NEDD9 with PLK1. In terms of tissue distribution, expressed in B-cells (at protein level). Expressed in the respiratory epithelium of the main bronchi to the bronchioles in the lungs (at protein level). High levels detected in kidney, lung, and placenta. Expressed in lymphocytes.

The protein resides in the cytoplasm. The protein localises to the cell cortex. It localises to the nucleus. Its subcellular location is the golgi apparatus. It is found in the cell projection. The protein resides in the lamellipodium. The protein localises to the cell junction. It localises to the focal adhesion. Its subcellular location is the cytoskeleton. It is found in the spindle pole. The protein resides in the cilium. The protein localises to the cilium basal body. It localises to the basolateral cell membrane. Its subcellular location is the spindle. In terms of biological role, scaffolding protein which plays a central coordinating role for tyrosine-kinase-based signaling related to cell adhesion. As a focal adhesion protein, plays a role in embryonic fibroblast migration. May play an important role in integrin beta-1 or B cell antigen receptor (BCR) mediated signaling in B- and T-cells. Integrin beta-1 stimulation leads to recruitment of various proteins including CRKL and SHPTP2 to the tyrosine phosphorylated form. Promotes adhesion and migration of lymphocytes; as a result required for the correct migration of lymphocytes to the spleen and other secondary lymphoid organs. Plays a role in the organization of T-cell F-actin cortical cytoskeleton and the centralization of T-cell receptor microclusters at the immunological synapse. Negatively regulates cilia outgrowth in polarized cysts. Modulates cilia disassembly via activation of AURKA-mediated phosphorylation of HDAC6 and subsequent deacetylation of alpha-tubulin. Positively regulates RANKL-induced osteoclastogenesis. Required for the maintenance of hippocampal dendritic spines in the dentate gyrus and CA1 regions, thereby involved in spatial learning and memory. In Homo sapiens (Human), this protein is Enhancer of filamentation 1.